The following is a 175-amino-acid chain: Transcriptional repressor NrdR (175 aa).

Residues C3–C32 fold into a zinc finger. Positions L47–Q137 constitute an ATP-cone domain.

The protein belongs to the NrdR family. Requires Zn(2+) as cofactor.

Functionally, negatively regulates transcription of bacterial ribonucleotide reductase nrd genes and operons by binding to NrdR-boxes. The protein is Transcriptional repressor NrdR of Dehalococcoides mccartyi (strain CBDB1).